A 429-amino-acid polypeptide reads, in one-letter code: MRVKYFGTDGIRGIFGETLTDELAFKVGKALGEIVGEGKVIVGKDTRVSGDSLEAAISAGLTSMGVDVLLCGILPTPAVALLTRITRSFGVVISASHNPPEYNGIKVLKGGYKIPDEMEAEIEKRLENGSFLTRSVVGRTKSFREGRDMYIGAVLEMFRDLDLTGEMVSLDLANGATTTTAREVFEFLGAKVEVFNDSQDGLLINQGCGATHPRFLAEEMKNGKVGFTFDGDGDRVIAVDEERNVVNGDRIIGILAVGLKEEGRLNSDTVVGTVMTNGGLEDFLKEKGIRLLRTKVGDKYVLEKMLESGANLGGERSGHIIILDRSTTGDGLITALELMRVLKRSGRKLSDFAKEIPDYPQITKNVRRTERMSLENENLRKIVEESTSRGYRVVIRPSGTEPVIRITVEGKDREEIEKIVEEISRVLES.

Ser96 (phosphoserine intermediate) is an active-site residue. Mg(2+)-binding residues include Ser96, Asp230, Asp232, and Asp234. Ser96 carries the phosphoserine modification.

Belongs to the phosphohexose mutase family. The cofactor is Mg(2+). Activated by phosphorylation.

The enzyme catalyses alpha-D-glucosamine 1-phosphate = D-glucosamine 6-phosphate. Functionally, catalyzes the conversion of glucosamine-6-phosphate to glucosamine-1-phosphate. This chain is Phosphoglucosamine mutase, found in Thermotoga maritima (strain ATCC 43589 / DSM 3109 / JCM 10099 / NBRC 100826 / MSB8).